Consider the following 265-residue polypeptide: Proteasome subunit alpha (265 aa).

The disordered stretch occupies residues 236–265 (EKDSKGSKGAQNPKGARDSKNSKSYGESTD).

Belongs to the peptidase T1A family. In terms of assembly, the 20S proteasome core is composed of 14 alpha and 14 beta subunits that assemble into four stacked heptameric rings, resulting in a barrel-shaped structure. The two inner rings, each composed of seven catalytic beta subunits, are sandwiched by two outer rings, each composed of seven alpha subunits. The catalytic chamber with the active sites is on the inside of the barrel. Has a gated structure, the ends of the cylinder being occluded by the N-termini of the alpha-subunits. Is capped by the proteasome-associated ATPase, ARC.

It is found in the cytoplasm. Its pathway is protein degradation; proteasomal Pup-dependent pathway. The formation of the proteasomal ATPase ARC-20S proteasome complex, likely via the docking of the C-termini of ARC into the intersubunit pockets in the alpha-rings, may trigger opening of the gate for substrate entry. Interconversion between the open-gate and close-gate conformations leads to a dynamic regulation of the 20S proteasome proteolysis activity. In terms of biological role, component of the proteasome core, a large protease complex with broad specificity involved in protein degradation. The sequence is that of Proteasome subunit alpha from Mycobacterium leprae (strain Br4923).